The chain runs to 390 residues: Chorismate synthase (390 aa).

NADP(+) is bound by residues arginine 39 and arginine 45. Residues 132–134 (RSS), 253–254 (NA), glycine 298, 313–317 (KPIPT), and arginine 339 each bind FMN.

The protein belongs to the chorismate synthase family. In terms of assembly, homotetramer. Requires FMNH2 as cofactor.

It catalyses the reaction 5-O-(1-carboxyvinyl)-3-phosphoshikimate = chorismate + phosphate. The protein operates within metabolic intermediate biosynthesis; chorismate biosynthesis; chorismate from D-erythrose 4-phosphate and phosphoenolpyruvate: step 7/7. Catalyzes the anti-1,4-elimination of the C-3 phosphate and the C-6 proR hydrogen from 5-enolpyruvylshikimate-3-phosphate (EPSP) to yield chorismate, which is the branch point compound that serves as the starting substrate for the three terminal pathways of aromatic amino acid biosynthesis. This reaction introduces a second double bond into the aromatic ring system. The protein is Chorismate synthase of Shouchella clausii (strain KSM-K16) (Alkalihalobacillus clausii).